The chain runs to 360 residues: F-box protein SKP2B (360 aa).

The 52-residue stretch at 25–76 folds into the F-box domain; the sequence is ISEWKDIPVELLMKILNLVDDRTVIIASCICSGWRDAVSLGLTRLSLSWCKK. 9 LRR repeats span residues 77–99, 101–126, 127–152, 153–178, 180–205, 206–231, 232–257, 258–301, and 302–333; these read NMNS…VLRQ, KPQL…DLSK, SSKI…NLSG, CTSF…NLCG, VEAV…NLGW, CENI…DLCS, CVLI…GLYY, CRNI…NISQ, and CTYL…VMSG.

Component of SCF(SKP2B) E3 ubiquitin ligase complexes, which mediate the ubiquitination and subsequent proteasomal degradation of the cyclin-dependent kinase inhibitor KRP1. Does not interact with auxin. The sequence is that of F-box protein SKP2B (SKP2B) from Arabidopsis thaliana (Mouse-ear cress).